A 351-amino-acid polypeptide reads, in one-letter code: Rhodopsin (351 aa).

Topologically, residues M1–A36 are extracellular. N-linked (GlcNAc...) asparagine glycosylation is found at N2 and N15. A helical transmembrane segment spans residues Y37–V61. Residues T62–N73 are Cytoplasmic-facing. The helical transmembrane segment at Y74 to Y96 threads the bilayer. Over T97–C110 the chain is Extracellular. Residues C110 and C187 are joined by a disulfide bond. Residues N111–I133 traverse the membrane as a helical segment. The 'Ionic lock' involved in activated form stabilization signature appears at E134–W136. Over E134–H152 the chain is Cytoplasmic. The chain crosses the membrane as a helical span at residues A153 to V173. Over G174–S202 the chain is Extracellular. N200 is a glycosylation site (N-linked (GlcNAc...) asparagine). Residues F203–G224 traverse the membrane as a helical segment. The Cytoplasmic segment spans residues R225–R252. Residues M253–F274 form a helical membrane-spanning segment. The Extracellular portion of the chain corresponds to I275 to L286. The helical transmembrane segment at F287–C308 threads the bilayer. The residue at position 296 (K296) is an N6-(retinylidene)lysine. Over M309–A351 the chain is Cytoplasmic. The S-palmitoyl cysteine moiety is linked to residue C323. Positions G330–A351 are disordered. Residues A335–A351 are compositionally biased toward low complexity.

Belongs to the G-protein coupled receptor 1 family. Opsin subfamily. Phosphorylated on some or all of the serine and threonine residues present in the C-terminal region. Post-translationally, contains one covalently linked retinal chromophore.

It localises to the membrane. It is found in the cell projection. Its subcellular location is the cilium. The protein resides in the photoreceptor outer segment. Its function is as follows. Photoreceptor required for image-forming vision at low light intensity. While most salt water fish species use retinal as chromophore, most freshwater fish use 3-dehydroretinal, or a mixture of retinal and 3-dehydroretinal. Light-induced isomerization of 11-cis to all-trans retinal triggers a conformational change that activates signaling via G-proteins. Subsequent receptor phosphorylation mediates displacement of the bound G-protein alpha subunit by arrestin and terminates signaling. This chain is Rhodopsin (rho), found in Sargocentron diadema (Crown squirrelfish).